Reading from the N-terminus, the 978-residue chain is Probable serine/threonine-protein kinase PLK (978 aa).

Low complexity predominate over residues 19–36 (IQIQQQQFKQPQQQPQQK). 2 disordered regions span residues 19–66 (IQIQ…SSIH) and 121–143 (QQQQQQQQMPPPQSLPNKSNEPQ). The segment covering 37 to 53 (SNSCFSDQENYPANIQP) has biased composition (polar residues). The span at 54–64 (SSSTSSSSSSS) shows a compositional bias: low complexity. Residues 163-416 (YRQGEFLGKG…LTQILEHDFF (254 aa)) enclose the Protein kinase domain. ATP contacts are provided by residues 169 to 177 (LGKGGFAKC) and K192. D286 acts as the Proton acceptor in catalysis. Disordered regions lie at residues 463–554 (GTTS…FANL) and 601–638 (ENQQQQQQQQQQQQQQQQQQQRVNNNINNNGNTVTVTT). 2 stretches are compositionally biased toward low complexity: residues 473 to 492 (HHYQQYQQQPQQQYNNNYQQ) and 500 to 549 (INNM…NINN). Coiled-coil stretches lie at residues 497–555 (KKQI…ANLS) and 592–630 (IKQQYTNMNENQQQQQQQQQQQQQQQQQQQRVNNNINNN). The 85-residue stretch at 696–780 (YISQYADFTN…IKYFLNHFTN (85 aa)) folds into the POLO box 1 domain. The segment at 798-819 (NNNNNNNVENVTNNNNNNSNNS) is disordered. A POLO box 2 domain is found at 826-904 (YVKKWIKFDN…IYGTLSNNLY (79 aa)). The tract at residues 908–978 (PESSFQQLPQ…SIPQPQLINQ (71 aa)) is disordered. Residues 913–978 (QQLPQQQYQQ…SIPQPQLINQ (66 aa)) show a composition bias toward low complexity.

It belongs to the protein kinase superfamily. Ser/Thr protein kinase family. CDC5/Polo subfamily.

The catalysed reaction is L-seryl-[protein] + ATP = O-phospho-L-seryl-[protein] + ADP + H(+). It carries out the reaction L-threonyl-[protein] + ATP = O-phospho-L-threonyl-[protein] + ADP + H(+). This chain is Probable serine/threonine-protein kinase PLK (PLK), found in Dictyostelium discoideum (Social amoeba).